Here is a 180-residue protein sequence, read N- to C-terminus: MVNRLKEKYDNEIVPSLMEKFNYTSIMQAPKVDKIVINMGVGDAVSNAKRLDEAVDELTLIAGQKPVITKAKKSIAGFRLREGMAIGAKVTLRGQRMYEFLDKLVSVSLPRVRDFHGVSKRAFDGRGNYTLGIREQLIFPEIDFDDVNKVRGMDIVIVTTANTDEESRELLTQLGMPFAK.

The protein belongs to the universal ribosomal protein uL5 family. As to quaternary structure, part of the 50S ribosomal subunit; part of the 5S rRNA/L5/L18/L25 subcomplex. Contacts the 5S rRNA and the P site tRNA. Forms a bridge to the 30S subunit in the 70S ribosome.

In terms of biological role, this is one of the proteins that bind and probably mediate the attachment of the 5S RNA into the large ribosomal subunit, where it forms part of the central protuberance. In the 70S ribosome it contacts protein S13 of the 30S subunit (bridge B1b), connecting the 2 subunits; this bridge is implicated in subunit movement. Contacts the P site tRNA; the 5S rRNA and some of its associated proteins might help stabilize positioning of ribosome-bound tRNAs. The polypeptide is Large ribosomal subunit protein uL5 (Ligilactobacillus salivarius (strain UCC118) (Lactobacillus salivarius)).